Reading from the N-terminus, the 178-residue chain is Cytidylate kinase 2 (178 aa).

An ATP-binding site is contributed by 7-15; that stretch reads GKSGCGNTT.

The protein belongs to the cytidylate kinase family. Type 2 subfamily.

It localises to the cytoplasm. The catalysed reaction is CMP + ATP = CDP + ADP. It carries out the reaction dCMP + ATP = dCDP + ADP. The sequence is that of Cytidylate kinase 2 from Borrelia garinii subsp. bavariensis (strain ATCC BAA-2496 / DSM 23469 / PBi) (Borreliella bavariensis).